The primary structure comprises 132 residues: ATP synthase epsilon chain 1 (132 aa).

The protein belongs to the ATPase epsilon chain family. As to quaternary structure, F-type ATPases have 2 components, CF(1) - the catalytic core - and CF(0) - the membrane proton channel. CF(1) has five subunits: alpha(3), beta(3), gamma(1), delta(1), epsilon(1). CF(0) has three main subunits: a, b and c.

Its subcellular location is the cell inner membrane. Functionally, produces ATP from ADP in the presence of a proton gradient across the membrane. The chain is ATP synthase epsilon chain 1 from Cereibacter sphaeroides (strain ATCC 17023 / DSM 158 / JCM 6121 / CCUG 31486 / LMG 2827 / NBRC 12203 / NCIMB 8253 / ATH 2.4.1.) (Rhodobacter sphaeroides).